The chain runs to 350 residues: Probable arabinogalactan endo-beta-1,4-galactanase A (350 aa).

Positions 1 to 16 (MIYPLLLSALPLLSSA) are cleaved as a signal peptide. N-linked (GlcNAc...) asparagine glycosylation is present at Asn-128. Glu-152 acts as the Proton donor in catalysis. Catalysis depends on Glu-262, which acts as the Nucleophile.

This sequence belongs to the glycosyl hydrolase 53 family.

It is found in the secreted. It carries out the reaction The enzyme specifically hydrolyzes (1-&gt;4)-beta-D-galactosidic linkages in type I arabinogalactans.. Functionally, endogalactanase involved in the degradation of plant cell wall polysaccharides, and more particularly of hairy regions of pectin. This chain is Probable arabinogalactan endo-beta-1,4-galactanase A (galA), found in Aspergillus tubingensis.